The chain runs to 1047 residues: Ras GTPase-activating protein 1 (1047 aa).

An N-acetylmethionine modification is found at Met1. Residues Trp181–Val272 form the SH2 1 domain. Residues Glu279–Arg341 enclose the SH3 domain. Residues Trp351–Val441 form the SH2 2 domain. The PH domain occupies Asn474–Asn577. The C2 domain occupies Asn577–Phe690. A Phosphotyrosine modification is found at Tyr615. One can recognise a Ras-GAP domain in the interval Lys764–Leu974. Ser831 is subject to Phosphoserine.

In terms of assembly, interacts with SQSTM1. Interacts with SPSB1; the interaction does not promote degradation. Interacts with CAV2 (tyrosine phosphorylated form). Directly interacts with NCK1. Interacts with PDGFRB (tyrosine phosphorylated). Interacts (via SH2 domain) with the 'Tyr-9' phosphorylated form of PDPK1. Interacts with tyrosine-phosphorylated EPHB4. In terms of processing, the N-terminus is blocked. Post-translationally, phosphorylated by SRC and LCK. The phosphorylation SRC inhibits its ability to stimulate the Ras-GTPase activity, whereas phosphorylation by LCK does not display any effect on stimulation activity. In terms of tissue distribution, in placental villi, detected only in the trophoblast layer (cytotrophoblast and syncytiotrophoblast). Not detected in stromal, endothelial or Hofbauer cells (at protein level).

It is found in the cytoplasm. Its function is as follows. Inhibitory regulator of the Ras-cyclic AMP pathway. Stimulates the GTPase of normal but not oncogenic Ras p21; this stimulation may be further increased in the presence of NCK1. This chain is Ras GTPase-activating protein 1 (RASA1), found in Homo sapiens (Human).